A 114-amino-acid polypeptide reads, in one-letter code: Aspartate 1-decarboxylase (114 aa).

The active-site Schiff-base intermediate with substrate; via pyruvic acid is the Ser25. Residue Ser25 is modified to Pyruvic acid (Ser). Thr57 contributes to the substrate binding site. Tyr58 acts as the Proton donor in catalysis. 73-75 (GAA) is a binding site for substrate.

It belongs to the PanD family. As to quaternary structure, heterooctamer of four alpha and four beta subunits. Requires pyruvate as cofactor. In terms of processing, is synthesized initially as an inactive proenzyme, which is activated by self-cleavage at a specific serine bond to produce a beta-subunit with a hydroxyl group at its C-terminus and an alpha-subunit with a pyruvoyl group at its N-terminus.

The protein localises to the cytoplasm. The catalysed reaction is L-aspartate + H(+) = beta-alanine + CO2. Its pathway is cofactor biosynthesis; (R)-pantothenate biosynthesis; beta-alanine from L-aspartate: step 1/1. In terms of biological role, catalyzes the pyruvoyl-dependent decarboxylation of aspartate to produce beta-alanine. This is Aspartate 1-decarboxylase from Thermotoga petrophila (strain ATCC BAA-488 / DSM 13995 / JCM 10881 / RKU-1).